Consider the following 103-residue polypeptide: Urease subunit beta (103 aa).

Belongs to the urease beta subunit family. Heterotrimer of UreA (gamma), UreB (beta) and UreC (alpha) subunits. Three heterotrimers associate to form the active enzyme.

It localises to the cytoplasm. The enzyme catalyses urea + 2 H2O + H(+) = hydrogencarbonate + 2 NH4(+). It functions in the pathway nitrogen metabolism; urea degradation; CO(2) and NH(3) from urea (urease route): step 1/1. Its function is as follows. Ureolysis may allow urea to be employed as a nitrogen source for growth and produces ammonia which may protect from killing at low pH. The polypeptide is Urease subunit beta (Streptococcus salivarius (strain 57.I)).